The chain runs to 392 residues: D-amino-acid oxidase 2 (392 aa).

FAD-binding residues include S10, I13, R33, D34, A45, S46, G50, and N52. Residues F56, Y245, Y262, and R311 each coordinate anthranilate. The (R)-lactate site is built by Y245, Y262, and R311. Positions 311, 361, 362, 364, and 366 each coordinate FAD. Residue S362 coordinates anthranilate. Residue S362 coordinates (R)-lactate. The Microbody targeting signal motif lies at 390 to 392 (AKL).

It belongs to the DAMOX/DASOX family. FAD serves as cofactor.

It localises to the peroxisome matrix. The catalysed reaction is a D-alpha-amino acid + O2 + H2O = a 2-oxocarboxylate + H2O2 + NH4(+). It catalyses the reaction D-methionine + O2 + H2O = 4-methylsulfanyl-2-oxobutanoate + H2O2 + NH4(+). The enzyme catalyses D-serine + O2 + H2O = 3-hydroxypyruvate + H2O2 + NH4(+). It carries out the reaction D-histidine + O2 + H2O = 3-(imidazol-5-yl)pyruvate + H2O2 + NH4(+). The catalysed reaction is D-proline + O2 = 1-pyrroline-2-carboxylate + H2O2. It catalyses the reaction D-alanine + O2 + H2O = pyruvate + H2O2 + NH4(+). The enzyme catalyses D-leucine + O2 + H2O = 4-methyl-2-oxopentanoate + H2O2 + NH4(+). It carries out the reaction D-valine + O2 + H2O = 3-methyl-2-oxobutanoate + H2O2 + NH4(+). In terms of biological role, catalyzes the oxidative deamination of D-amino acids with broad substrate specificity. Enables the organism to utilize D-amino acids as a source of nutrients. Enables the organism to utilize D-alanine, D-cysteine, D-histidine, D-leucine, D-methionine, D-phenylalanine, D-proline, D-serine, D-threonine, D-aspartate and D-valine as a nitrogen source and may also contribute to utlization of D-tryptophan, D-tyrosine and D-asparagine as a nitrogen source. Protects the organism from the toxicity of D-amino acids, including from D-alanine. May play a role in its interaction with the host. The protein is D-amino-acid oxidase 2 of Cryptococcus deuterogattii (strain R265) (Cryptococcus gattii VGII (strain R265)).